A 305-amino-acid chain; its full sequence is Ribosomal RNA small subunit methyltransferase H (305 aa).

S-adenosyl-L-methionine contacts are provided by residues 47-49 (GGH), Asp66, Phe93, Asp108, and Gln115.

It belongs to the methyltransferase superfamily. RsmH family.

It is found in the cytoplasm. It carries out the reaction cytidine(1402) in 16S rRNA + S-adenosyl-L-methionine = N(4)-methylcytidine(1402) in 16S rRNA + S-adenosyl-L-homocysteine + H(+). In terms of biological role, specifically methylates the N4 position of cytidine in position 1402 (C1402) of 16S rRNA. The sequence is that of Ribosomal RNA small subunit methyltransferase H from Prochlorococcus marinus (strain MIT 9211).